Here is a 116-residue protein sequence, read N- to C-terminus: Early 4 ORF3 protein (116 aa).

This sequence belongs to the adenoviridae E4 ORF3 family. In terms of assembly, homodimer. Multimerizes through C-terminus tail by reciprocal or nonreciprocal interactions. Interacts with host PML isoform 2 C-terminal disordered region. Interacts with E1B-55k; this interaction is necessary for E1B 55 kDa protein to localize to the nuclear matrix fraction of the cell. May interact with host TRIM24, CREBBP, EP300, PRKDC and the MRN complex MRE11/RAD50/NBS1; these interactions may happen through nuclear bodies complexes.

It is found in the host nucleus. Its function is as follows. Forms a multivalent network in host nucleus that inhibits nuclear bodies and prevents antiviral cellular activities. The network is made of multimerized dimers and surrounds adenovirus replication centers and nucleolus. Plays a role in splicing of the major late transcript. Prevents viral genome concatemer formation. The polypeptide is Early 4 ORF3 protein (Human adenovirus C serotype 2 (HAdV-2)).